A 177-amino-acid chain; its full sequence is Large ribosomal subunit protein uL6 (177 aa).

The protein belongs to the universal ribosomal protein uL6 family. As to quaternary structure, part of the 50S ribosomal subunit.

Its function is as follows. This protein binds to the 23S rRNA, and is important in its secondary structure. It is located near the subunit interface in the base of the L7/L12 stalk, and near the tRNA binding site of the peptidyltransferase center. This is Large ribosomal subunit protein uL6 from Polaromonas naphthalenivorans (strain CJ2).